The chain runs to 56 residues: uncharacterized protein (56 aa).

A disordered region spans residues 15–56; that stretch reads SIGNISSGNINNSIGNSSSSGCDDVFNNSTNNNNNNNNNNNK.

This is an uncharacterized protein from Dictyostelium discoideum (Social amoeba).